A 739-amino-acid chain; its full sequence is Alcohol dehydrogenase (quinone), dehydrogenase subunit (739 aa).

The first 35 residues, Met-1–Ala-35, serve as a signal peptide directing secretion. Glu-97 provides a ligand contact to pyrroloquinoline quinone. Cys-143 and Cys-144 form a disulfide bridge. Arg-149 contacts pyrroloquinoline quinone. Glu-217 serves as a coordination point for Ca(2+). Position 279 (Thr-279) interacts with pyrroloquinoline quinone. Ca(2+) is bound by residues Asn-299 and Asp-344. Asp-344 acts as the Proton acceptor in catalysis. Lys-371 and Ile-585 together coordinate pyrroloquinoline quinone. The Cytochrome c domain maps to Phe-635–Pro-739. Residues Cys-651, Cys-654, His-655, and Met-694 each coordinate heme c.

The protein belongs to the bacterial PQQ dehydrogenase family. The alcohol dehydrogenase multicomponent enzyme system is composed of a dehydrogenase subunit I (AdhA) and a cytochrome c subunit II (AdhB). Requires pyrroloquinoline quinone as cofactor. Ca(2+) serves as cofactor. The cofactor is heme c.

The protein localises to the cell membrane. The catalysed reaction is ethanol + a ubiquinone = a ubiquinol + acetaldehyde. Functionally, dehydrogenase component of the alcohol dehydrogenase multicomponent enzyme system which is involved in the production of acetic acid and in the ethanol oxidase respiratory chain. Quinohemoprotein alcohol dehydrogenase (ADH) catalyzes the oxidation of ethanol to acetaldehyde by transferring electrons to the ubiquinone embedded in the membrane phospholipids. The electrons transfer from ethanol to membranous ubiquinone occurs from pyrroloquinoline quinone (PQQ) to one heme c in subunit I (AdhA), and finally to two heme c in subunit II (AdhB). Besides ubiquinone reduction, ADH also has a ubiquinol (QH2) oxidation reaction which mediates electron transfer from ubiquinol to the non-energy generating bypass oxidase system. The electrons transfer occurs from ubiquinol (QH2) to the additional heme c within subunit II (AdhB). In Komagataeibacter europaeus (Gluconacetobacter europaeus), this protein is Alcohol dehydrogenase (quinone), dehydrogenase subunit.